We begin with the raw amino-acid sequence, 456 residues long: RUN domain-containing protein 3B (456 aa).

Positions 1–24 are disordered; the sequence is MASRSLGGLSGIRGGGGGGGKKSL. A compositionally biased stretch (gly residues) spans 8-21; it reads GLSGIRGGGGGGGK. Arg13 bears the Omega-N-methylarginine mark. The RUN domain maps to 57 to 189; the sequence is DDSSPEFNNF…IDFSFCLKGE (133 aa). 2 positions are modified to phosphoserine: Ser215 and Ser216. A disordered region spans residues 216 to 237; it reads SDEEELRTLGSSGSESSTPENV. The span at 224–235 shows a compositional bias: polar residues; that stretch reads LGSSGSESSTPE. Residues 300–325 adopt a coiled-coil conformation; sequence AHKLEKEQLEYIIVELQDQLTVLKNN. Over residues 382 to 405 the composition is skewed to polar residues; that stretch reads SLSQTSLDPGQSQEGDGKQDTLNV. The tract at residues 382 to 411 is disordered; sequence SLSQTSLDPGQSQEGDGKQDTLNVMSEGKE.

This sequence belongs to the RUNDC3 family. As to quaternary structure, interacts with RAP2A.

This chain is RUN domain-containing protein 3B (RUNDC3B), found in Pongo abelii (Sumatran orangutan).